Reading from the N-terminus, the 566-residue chain is Serine/threonine-protein kinase PknE (566 aa).

Residues 1–337 (MDGTAESREG…PLPRSARQPW (337 aa)) are Cytoplasmic-facing. Position 7 is a phosphoserine; by autocatalysis (Ser7). Thr11 bears the Phosphothreonine; by autocatalysis mark. The 260-residue stretch at 16-275 (YRLRRLVGRG…DLSAAAHAAL (260 aa)) folds into the Protein kinase domain. ATP-binding positions include 22 to 30 (VGRGGMGDV) and Lys45. A phosphothreonine; by autocatalysis mark is found at Thr50 and Thr59. Asp139 serves as the catalytic Proton acceptor. 3 positions are modified to phosphothreonine; by autocatalysis: Thr170, Thr175, and Thr178. Residues 296 to 330 (PVPSTHPVSPGTRWPQPTPWAGGAPPWGPPSSPLP) are disordered. A helical membrane pass occupies residues 338–358 (LWVGVAVAVVVALAGGLGIAL). Topologically, residues 359-566 (AHPWRSSGPR…DPSWLARLIG (208 aa)) are extracellular.

This sequence belongs to the protein kinase superfamily. Ser/Thr protein kinase family. In terms of assembly, homodimer. Post-translationally, autophosphorylated on serine and threonine residues. Dephosphorylated by PstP.

Its subcellular location is the cell membrane. It catalyses the reaction L-seryl-[protein] + ATP = O-phospho-L-seryl-[protein] + ADP + H(+). The enzyme catalyses L-threonyl-[protein] + ATP = O-phospho-L-threonyl-[protein] + ADP + H(+). A serine/threonine-protein kinase, acts on HupB in vitro, modifying at least 2 Ser and 8 Thr residues. Important for bacterial survival in the host during infection. The protein is Serine/threonine-protein kinase PknE of Mycobacterium tuberculosis (strain ATCC 25177 / H37Ra).